A 315-amino-acid polypeptide reads, in one-letter code: Glycine--tRNA ligase alpha subunit (315 aa).

It belongs to the class-II aminoacyl-tRNA synthetase family. As to quaternary structure, tetramer of two alpha and two beta subunits.

It localises to the cytoplasm. The enzyme catalyses tRNA(Gly) + glycine + ATP = glycyl-tRNA(Gly) + AMP + diphosphate. This is Glycine--tRNA ligase alpha subunit from Pseudomonas putida (strain W619).